Reading from the N-terminus, the 53-residue chain is UPF0391 membrane protein YPDSF_3201 (53 aa).

2 helical membrane-spanning segments follow: residues 4–24 and 27–47; these read WGII…GGLA and AAWA…ISLF.

It belongs to the UPF0391 family.

The protein resides in the cell membrane. The chain is UPF0391 membrane protein YPDSF_3201 from Yersinia pestis (strain Pestoides F).